Consider the following 430-residue polypeptide: Gamma-glutamyl phosphate reductase (430 aa).

Belongs to the gamma-glutamyl phosphate reductase family.

It localises to the cytoplasm. It catalyses the reaction L-glutamate 5-semialdehyde + phosphate + NADP(+) = L-glutamyl 5-phosphate + NADPH + H(+). The protein operates within amino-acid biosynthesis; L-proline biosynthesis; L-glutamate 5-semialdehyde from L-glutamate: step 2/2. Functionally, catalyzes the NADPH-dependent reduction of L-glutamate 5-phosphate into L-glutamate 5-semialdehyde and phosphate. The product spontaneously undergoes cyclization to form 1-pyrroline-5-carboxylate. This Polaromonas naphthalenivorans (strain CJ2) protein is Gamma-glutamyl phosphate reductase.